Here is a 502-residue protein sequence, read N- to C-terminus: UDP-N-acetylglucosamine diphosphorylase 2 (502 aa).

Positions 130–133 match the Substrate binding motif; the sequence is LSGG. Asn250 is a binding site for substrate. Residues 332–333 carry the Substrate binding motif; it reads EY. Lys429 serves as a coordination point for substrate.

It belongs to the UDPGP type 1 family. Monomer. Mg(2+) is required as a cofactor. Mn(2+) serves as cofactor. As to expression, expressed in root tips, stipules, lateral root primordia, immature anthers and at the branching points of the flowering shoots.

The protein resides in the cytoplasm. It catalyses the reaction N-acetyl-alpha-D-glucosamine 1-phosphate + UTP + H(+) = UDP-N-acetyl-alpha-D-glucosamine + diphosphate. The catalysed reaction is N-acetyl-alpha-D-galactosamine 1-phosphate + UTP + H(+) = UDP-N-acetyl-alpha-D-galactosamine + diphosphate. The enzyme catalyses alpha-D-glucose 1-phosphate + UTP + H(+) = UDP-alpha-D-glucose + diphosphate. The protein operates within nucleotide-sugar biosynthesis; UDP-N-acetyl-alpha-D-glucosamine biosynthesis; UDP-N-acetyl-alpha-D-glucosamine from N-acetyl-alpha-D-glucosamine 1-phosphate: step 1/1. Its function is as follows. Uridylyltransferase involved in the biosynthesis of UDP-glucosamine, an essential precursor for glycoprotein and glycolipid synthesis. Can use UDP-glucosamine, the 4-epimer UDP-galactosamine and UDP-glucose as substrates. Acts redundantly with GLCNAC1PUT1. Required for gametogenesis and embryo development. The chain is UDP-N-acetylglucosamine diphosphorylase 2 (GLCNAC1PUT2) from Arabidopsis thaliana (Mouse-ear cress).